Here is a 465-residue protein sequence, read N- to C-terminus: ATP-dependent protease ATPase subunit HslU (465 aa).

Residues V19, 61 to 66 (GVGKTE), D277, E343, and R415 contribute to the ATP site.

Belongs to the ClpX chaperone family. HslU subfamily. In terms of assembly, a double ring-shaped homohexamer of HslV is capped on each side by a ring-shaped HslU homohexamer. The assembly of the HslU/HslV complex is dependent on binding of ATP.

The protein resides in the cytoplasm. Its function is as follows. ATPase subunit of a proteasome-like degradation complex; this subunit has chaperone activity. The binding of ATP and its subsequent hydrolysis by HslU are essential for unfolding of protein substrates subsequently hydrolyzed by HslV. HslU recognizes the N-terminal part of its protein substrates and unfolds these before they are guided to HslV for hydrolysis. This Geobacillus sp. (strain WCH70) protein is ATP-dependent protease ATPase subunit HslU.